Consider the following 328-residue polypeptide: Ribosomal RNA small subunit methyltransferase H (328 aa).

Residues 37–39, Asp57, Phe83, Asp104, and Gln111 contribute to the S-adenosyl-L-methionine site; that span reads GGH.

This sequence belongs to the methyltransferase superfamily. RsmH family.

It is found in the cytoplasm. It carries out the reaction cytidine(1402) in 16S rRNA + S-adenosyl-L-methionine = N(4)-methylcytidine(1402) in 16S rRNA + S-adenosyl-L-homocysteine + H(+). Functionally, specifically methylates the N4 position of cytidine in position 1402 (C1402) of 16S rRNA. In Neisseria meningitidis serogroup B (strain ATCC BAA-335 / MC58), this protein is Ribosomal RNA small subunit methyltransferase H.